Here is a 248-residue protein sequence, read N- to C-terminus: Large ribosomal subunit protein uL4 (248 aa).

The tract at residues 44–109 (QDTGTDEYAG…LDINTKERKL (66 aa)) is disordered. Residues 92 to 109 (PKAEKDRGLDINTKERKL) are compositionally biased toward basic and acidic residues.

This sequence belongs to the universal ribosomal protein uL4 family. Part of the 50S ribosomal subunit.

Its function is as follows. One of the primary rRNA binding proteins, this protein initially binds near the 5'-end of the 23S rRNA. It is important during the early stages of 50S assembly. It makes multiple contacts with different domains of the 23S rRNA in the assembled 50S subunit and ribosome. Functionally, forms part of the polypeptide exit tunnel. The chain is Large ribosomal subunit protein uL4 from Natronomonas pharaonis (strain ATCC 35678 / DSM 2160 / CIP 103997 / JCM 8858 / NBRC 14720 / NCIMB 2260 / Gabara) (Halobacterium pharaonis).